A 365-amino-acid polypeptide reads, in one-letter code: NAD(P)H-quinone oxidoreductase subunit 1, chloroplastic (365 aa).

8 helical membrane-spanning segments follow: residues 27 to 47 (VWIF…VLVI), 98 to 118 (FSIG…VIPF), 129 to 149 (IGIF…LMSG), 165 to 185 (AAQS…ISLL), 203 to 223 (FWGW…ISSL), 253 to 273 (FGLF…FVTI), 302 to 322 (IFGT…FLFI), and 345 to 365 (FLLP…LFSL).

This sequence belongs to the complex I subunit 1 family. As to quaternary structure, NDH is composed of at least 16 different subunits, 5 of which are encoded in the nucleus.

The protein localises to the plastid. It localises to the chloroplast thylakoid membrane. It carries out the reaction a plastoquinone + NADH + (n+1) H(+)(in) = a plastoquinol + NAD(+) + n H(+)(out). The catalysed reaction is a plastoquinone + NADPH + (n+1) H(+)(in) = a plastoquinol + NADP(+) + n H(+)(out). Its function is as follows. NDH shuttles electrons from NAD(P)H:plastoquinone, via FMN and iron-sulfur (Fe-S) centers, to quinones in the photosynthetic chain and possibly in a chloroplast respiratory chain. The immediate electron acceptor for the enzyme in this species is believed to be plastoquinone. Couples the redox reaction to proton translocation, and thus conserves the redox energy in a proton gradient. The sequence is that of NAD(P)H-quinone oxidoreductase subunit 1, chloroplastic from Arabis hirsuta (Hairy rock-cress).